A 124-amino-acid polypeptide reads, in one-letter code: Large ribosomal subunit protein bL12 (124 aa).

Positions 94–124 (APKPVKESVPKAAAEEAKKKLEEAGAKAEIK) are disordered.

This sequence belongs to the bacterial ribosomal protein bL12 family. In terms of assembly, homodimer. Part of the ribosomal stalk of the 50S ribosomal subunit. Forms a multimeric L10(L12)X complex, where L10 forms an elongated spine to which 2 to 4 L12 dimers bind in a sequential fashion. Binds GTP-bound translation factors.

In terms of biological role, forms part of the ribosomal stalk which helps the ribosome interact with GTP-bound translation factors. Is thus essential for accurate translation. This is Large ribosomal subunit protein bL12 from Paraburkholderia phytofirmans (strain DSM 17436 / LMG 22146 / PsJN) (Burkholderia phytofirmans).